Here is a 321-residue protein sequence, read N- to C-terminus: Acetyl-coenzyme A carboxylase carboxyl transferase subunit alpha (321 aa).

Residues 39–293 (RLEVKSQALT…KRALAEALRQ (255 aa)) enclose the CoA carboxyltransferase C-terminal domain.

Belongs to the AccA family. In terms of assembly, acetyl-CoA carboxylase is a heterohexamer composed of biotin carboxyl carrier protein (AccB), biotin carboxylase (AccC) and two subunits each of ACCase subunit alpha (AccA) and ACCase subunit beta (AccD).

The protein localises to the cytoplasm. It catalyses the reaction N(6)-carboxybiotinyl-L-lysyl-[protein] + acetyl-CoA = N(6)-biotinyl-L-lysyl-[protein] + malonyl-CoA. The protein operates within lipid metabolism; malonyl-CoA biosynthesis; malonyl-CoA from acetyl-CoA: step 1/1. In terms of biological role, component of the acetyl coenzyme A carboxylase (ACC) complex. First, biotin carboxylase catalyzes the carboxylation of biotin on its carrier protein (BCCP) and then the CO(2) group is transferred by the carboxyltransferase to acetyl-CoA to form malonyl-CoA. This Azoarcus sp. (strain BH72) protein is Acetyl-coenzyme A carboxylase carboxyl transferase subunit alpha.